Consider the following 218-residue polypeptide: Phosphoglycolate phosphatase (218 aa).

The Nucleophile role is filled by aspartate 7. 3 residues coordinate Mg(2+): aspartate 7, aspartate 9, and aspartate 167.

Belongs to the HAD-like hydrolase superfamily. CbbY/CbbZ/Gph/YieH family. Mg(2+) serves as cofactor.

The enzyme catalyses 2-phosphoglycolate + H2O = glycolate + phosphate. It participates in organic acid metabolism; glycolate biosynthesis; glycolate from 2-phosphoglycolate: step 1/1. Functionally, specifically catalyzes the dephosphorylation of 2-phosphoglycolate. Is involved in the dissimilation of the intracellular 2-phosphoglycolate formed during the DNA repair of 3'-phosphoglycolate ends, a major class of DNA lesions induced by oxidative stress. The chain is Phosphoglycolate phosphatase from Cereibacter sphaeroides (strain ATCC 17025 / ATH 2.4.3) (Rhodobacter sphaeroides).